Consider the following 347-residue polypeptide: NADH-quinone oxidoreductase subunit H (347 aa).

A run of 8 helical transmembrane segments spans residues 25-45 (ILFMVVQSLVIFLVVVIVAAM), 95-115 (FMFTLAPAVAMFTALASFAII), 128-148 (IGILFFFAMAGIAVYAVLFGG), 168-188 (ISYEVFLGLSLMGVVALTGSF), 200-220 (GWYIIPQFFGFLTFVVAGVAV), 251-271 (FFIGEYVNVVLISALMTCLFF), 284-304 (FIPPAFWFMIKTLFFMTMFIL), and 324-344 (VCLPVTLINLLVTAAVILIFS).

This sequence belongs to the complex I subunit 1 family. NDH-1 is composed of 14 different subunits. Subunits NuoA, H, J, K, L, M, N constitute the membrane sector of the complex.

The protein resides in the cell inner membrane. The enzyme catalyses a quinone + NADH + 5 H(+)(in) = a quinol + NAD(+) + 4 H(+)(out). NDH-1 shuttles electrons from NADH, via FMN and iron-sulfur (Fe-S) centers, to quinones in the respiratory chain. The immediate electron acceptor for the enzyme in this species is believed to be ubiquinone. Couples the redox reaction to proton translocation (for every two electrons transferred, four hydrogen ions are translocated across the cytoplasmic membrane), and thus conserves the redox energy in a proton gradient. This subunit may bind ubiquinone. The sequence is that of NADH-quinone oxidoreductase subunit H from Psychrobacter arcticus (strain DSM 17307 / VKM B-2377 / 273-4).